The following is a 216-amino-acid chain: Somatotropin (216 aa).

Positions M1–A26 are cleaved as a signal peptide. H45 provides a ligand contact to Zn(2+). C78 and C189 are joined by a disulfide. Residue S131 is modified to Phosphoserine. E198 serves as a coordination point for Zn(2+). A disulfide bridge links C206 with C214.

The protein belongs to the somatotropin/prolactin family.

It is found in the secreted. Its function is as follows. Plays an important role in growth control. Its major role in stimulating body growth is to stimulate the liver and other tissues to secrete IGF1. It stimulates both the differentiation and proliferation of myoblasts. It also stimulates amino acid uptake and protein synthesis in muscle and other tissues. This chain is Somatotropin (GH1), found in Delphinus delphis (Short-beaked common dolphin).